The primary structure comprises 431 residues: Glutamyl-tRNA(Gln) amidotransferase subunit A (431 aa).

Catalysis depends on charge relay system residues lysine 55 and serine 130. The Acyl-ester intermediate role is filled by serine 154.

This sequence belongs to the amidase family. GatA subfamily. In terms of assembly, heterotrimer of A, B and C subunits.

It catalyses the reaction L-glutamyl-tRNA(Gln) + L-glutamine + ATP + H2O = L-glutaminyl-tRNA(Gln) + L-glutamate + ADP + phosphate + H(+). Allows the formation of correctly charged Gln-tRNA(Gln) through the transamidation of misacylated Glu-tRNA(Gln) in organisms which lack glutaminyl-tRNA synthetase. The reaction takes place in the presence of glutamine and ATP through an activated gamma-phospho-Glu-tRNA(Gln). The protein is Glutamyl-tRNA(Gln) amidotransferase subunit A of Methanococcus maripaludis (strain C6 / ATCC BAA-1332).